Here is a 165-residue protein sequence, read N- to C-terminus: Large ribosomal subunit protein uL5 (165 aa).

The protein belongs to the universal ribosomal protein uL5 family. In terms of assembly, part of the 50S ribosomal subunit; contacts the 5S rRNA and probably tRNA. Forms a bridge to the 30S subunit in the 70S ribosome.

In terms of biological role, this is one of the proteins that bind and probably mediate the attachment of the 5S RNA into the large ribosomal subunit, where it forms part of the central protuberance. In the 70S ribosome it contacts protein S13 of the 30S subunit (bridge B1b), connecting the 2 subunits; this bridge is implicated in subunit movement. May contact the P site tRNA; the 5S rRNA and some of its associated proteins might help stabilize positioning of ribosome-bound tRNAs. The protein is Large ribosomal subunit protein uL5 of Methanosarcina acetivorans (strain ATCC 35395 / DSM 2834 / JCM 12185 / C2A).